The sequence spans 355 residues: Countin-like protein (355 aa).

An N-terminal signal peptide occupies residues Met1–Ala27. Positions Asn63 to Asn83 are disordered. Residues Asn69 to Asn83 show a composition bias toward low complexity. The Saposin B-type domain maps to Gly93–Lys177. 3 disulfide bridges follow: Cys97-Cys173, Cys100-Cys167, and Cys128-Cys140. N-linked (GlcNAc...) asparagine glycosylation is found at Asn132, Asn209, Asn242, Asn253, Asn254, Asn282, and Asn303. Residues Ile290–Lys355 are disordered. Low complexity predominate over residues Pro301–Thr342. Residues His345–Lys355 show a composition bias toward basic residues.

The protein belongs to the countin family.

Its subcellular location is the secreted. This chain is Countin-like protein, found in Dictyostelium discoideum (Social amoeba).